The primary structure comprises 83 residues: Large ribosomal subunit protein bL31B (83 aa).

It belongs to the bacterial ribosomal protein bL31 family. Type B subfamily. In terms of assembly, part of the 50S ribosomal subunit.

This chain is Large ribosomal subunit protein bL31B, found in Lacticaseibacillus casei (strain BL23) (Lactobacillus casei).